The primary structure comprises 277 residues: Large ribosomal subunit protein uL2 (277 aa).

2 disordered regions span residues 36–58 (PLHKKGGRNNQGKLTVRHQGGGH) and 219–277 (TVRG…RKNK). Residues 258–277 (KTRKKKNKSDKFIVRRRKNK) show a composition bias toward basic residues.

It belongs to the universal ribosomal protein uL2 family. As to quaternary structure, part of the 50S ribosomal subunit. Forms a bridge to the 30S subunit in the 70S ribosome.

In terms of biological role, one of the primary rRNA binding proteins. Required for association of the 30S and 50S subunits to form the 70S ribosome, for tRNA binding and peptide bond formation. It has been suggested to have peptidyltransferase activity; this is somewhat controversial. Makes several contacts with the 16S rRNA in the 70S ribosome. This chain is Large ribosomal subunit protein uL2, found in Bacillus velezensis (strain DSM 23117 / BGSC 10A6 / LMG 26770 / FZB42) (Bacillus amyloliquefaciens subsp. plantarum).